A 93-amino-acid polypeptide reads, in one-letter code: Acylphosphatase (93 aa).

The region spanning 5-93 (CIIAWVHGRV…EELTGFRIRY (89 aa)) is the Acylphosphatase-like domain. Residues R20 and N38 contribute to the active site.

Belongs to the acylphosphatase family.

The enzyme catalyses an acyl phosphate + H2O = a carboxylate + phosphate + H(+). This is Acylphosphatase (acyP) from Citrobacter koseri (strain ATCC BAA-895 / CDC 4225-83 / SGSC4696).